We begin with the raw amino-acid sequence, 66 residues long: DNA gyrase inhibitor YacG (66 aa).

Zn(2+) contacts are provided by C9, C12, C28, and C32. The tract at residues 45 to 66 (HKIAGSEESEDELYSGDLEPRH) is disordered.

The protein belongs to the DNA gyrase inhibitor YacG family. Interacts with GyrB. It depends on Zn(2+) as a cofactor.

Inhibits all the catalytic activities of DNA gyrase by preventing its interaction with DNA. Acts by binding directly to the C-terminal domain of GyrB, which probably disrupts DNA binding by the gyrase. This is DNA gyrase inhibitor YacG from Pseudomonas putida (strain ATCC 47054 / DSM 6125 / CFBP 8728 / NCIMB 11950 / KT2440).